Reading from the N-terminus, the 272-residue chain is MSRAPDRIAACFDALRHSGRKALIPFITAGDPSLEATVPVMHALVRAGANIIELGVPFSDPMADGPTIQRSSERALGRGAGLAYVIEAVQEFRREDATTPVVLMGYLNPIEIHGTRRFAETAVAAGIDGVLLVDLPPEEADETRAIFTEVGLALIALASPTTGEARLDMLCSTAQGYLYYVSFSGVTGAADRLDTHAASDRLRQLRARAGAPVVAGFGIKDAASAAAMAVDADGVVVGSALVAALADASDVRSARKRAEDFLQPLRQALDAG.

Residues Glu53 and Asp64 each act as proton acceptor in the active site.

The protein belongs to the TrpA family. As to quaternary structure, tetramer of two alpha and two beta chains.

The catalysed reaction is (1S,2R)-1-C-(indol-3-yl)glycerol 3-phosphate + L-serine = D-glyceraldehyde 3-phosphate + L-tryptophan + H2O. It functions in the pathway amino-acid biosynthesis; L-tryptophan biosynthesis; L-tryptophan from chorismate: step 5/5. The alpha subunit is responsible for the aldol cleavage of indoleglycerol phosphate to indole and glyceraldehyde 3-phosphate. The chain is Tryptophan synthase alpha chain from Xanthomonas campestris pv. campestris (strain 8004).